A 346-amino-acid chain; its full sequence is Holliday junction branch migration complex subunit RuvB (346 aa).

Polar residues predominate over residues 1–11; it reads MTEQRTIASSA. A disordered region spans residues 1-20; the sequence is MTEQRTIASSATREDEAADA. Positions 1–183 are large ATPase domain (RuvB-L); that stretch reads MTEQRTIASS…FGIVQRLEFY (183 aa). Residues isoleucine 22, arginine 23, glycine 64, lysine 67, threonine 68, threonine 69, 130 to 132, arginine 173, tyrosine 183, and arginine 220 each bind ATP; that span reads EDF. Threonine 68 lines the Mg(2+) pocket. Positions 184–254 are small ATPAse domain (RuvB-S); that stretch reads SPQELTRIVI…VAQAAMQMLK (71 aa). Residues 257 to 346 form a head domain (RuvB-H) region; sequence PEGFDELDRR…PAIGEPGDLF (90 aa). Residues arginine 293, arginine 312, and arginine 317 each coordinate DNA.

Belongs to the RuvB family. As to quaternary structure, homohexamer. Forms an RuvA(8)-RuvB(12)-Holliday junction (HJ) complex. HJ DNA is sandwiched between 2 RuvA tetramers; dsDNA enters through RuvA and exits via RuvB. An RuvB hexamer assembles on each DNA strand where it exits the tetramer. Each RuvB hexamer is contacted by two RuvA subunits (via domain III) on 2 adjacent RuvB subunits; this complex drives branch migration. In the full resolvosome a probable DNA-RuvA(4)-RuvB(12)-RuvC(2) complex forms which resolves the HJ.

It localises to the cytoplasm. It carries out the reaction ATP + H2O = ADP + phosphate + H(+). Its function is as follows. The RuvA-RuvB-RuvC complex processes Holliday junction (HJ) DNA during genetic recombination and DNA repair, while the RuvA-RuvB complex plays an important role in the rescue of blocked DNA replication forks via replication fork reversal (RFR). RuvA specifically binds to HJ cruciform DNA, conferring on it an open structure. The RuvB hexamer acts as an ATP-dependent pump, pulling dsDNA into and through the RuvAB complex. RuvB forms 2 homohexamers on either side of HJ DNA bound by 1 or 2 RuvA tetramers; 4 subunits per hexamer contact DNA at a time. Coordinated motions by a converter formed by DNA-disengaged RuvB subunits stimulates ATP hydrolysis and nucleotide exchange. Immobilization of the converter enables RuvB to convert the ATP-contained energy into a lever motion, pulling 2 nucleotides of DNA out of the RuvA tetramer per ATP hydrolyzed, thus driving DNA branch migration. The RuvB motors rotate together with the DNA substrate, which together with the progressing nucleotide cycle form the mechanistic basis for DNA recombination by continuous HJ branch migration. Branch migration allows RuvC to scan DNA until it finds its consensus sequence, where it cleaves and resolves cruciform DNA. This Xanthomonas campestris pv. campestris (strain B100) protein is Holliday junction branch migration complex subunit RuvB.